Consider the following 608-residue polypeptide: Isoprene synthase, chloroplastic (608 aa).

The transit peptide at 1-45 (MATNLLCLSNKLSSPTPTPSTRFPQSKNFITQKTSLANPKPWRVI) directs the protein to the chloroplast. Asp350 lines the dimethylallyl diphosphate pocket. Positions 350 and 354 each coordinate Mg(2+). The DDXXD motif signature appears at 350–354 (DDVYD). Glu428, Arg494, and Asn497 together coordinate dimethylallyl diphosphate. Positions 497, 501, and 505 each coordinate Mg(2+).

Belongs to the terpene synthase family. Tpsb subfamily. Requires Mg(2+) as cofactor. Mn(2+) is required as a cofactor.

It is found in the plastid. It localises to the chloroplast. The enzyme catalyses dimethylallyl diphosphate = isoprene + diphosphate. Lyase that catalyzes the formation of isoprene from dimethylallyl diphosphate. The protein is Isoprene synthase, chloroplastic (ISPS) of Pueraria montana var. lobata (Kudzu vine).